Consider the following 888-residue polypeptide: Microtubule-associated protein 10 (888 aa).

Disordered regions lie at residues E398–G454, S508–R602, N620–V642, Q654–C683, and T699–S836. The span at L524–P541 shows a compositional bias: polar residues. A compositionally biased stretch (basic and acidic residues) spans E572 to T589. Over residues V590–S600 the composition is skewed to polar residues. Composition is skewed to polar residues over residues A661–C683, T699–G714, S722–F745, E772–T786, and A825–S836.

As to quaternary structure, interacts (via middle region) with microtubules.

The protein localises to the cytoplasm. The protein resides in the cytoskeleton. It is found in the spindle pole. It localises to the microtubule organizing center. Its subcellular location is the centrosome. The protein localises to the midbody. Its function is as follows. Microtubule-associated protein (MAP) that plays a role in the regulation of cell division; promotes microtubule stability and participates in the organization of the spindle midzone and normal progress of cytokinesis. The chain is Microtubule-associated protein 10 (Map10) from Rattus norvegicus (Rat).